We begin with the raw amino-acid sequence, 275 residues long: Ovocalyxin-32 (275 aa).

A signal peptide spans 1–23; sequence MPGLRAALPAALLLLSSFPPAAA. Cystatin LXN-type domains lie at 32–131 and 151–255; these read PGVM…NKKQ and TANY…GLED. The tract at residues 254–275 is disordered; sequence EDGSGQDSGSAAGTSHETKGNF. Residues 256–268 show a composition bias toward low complexity; it reads GSGQDSGSAAGTS.

Belongs to the protease inhibitor I47 (latexin) family. Expressed at high levels in the uterine and isthmus regions of the oviduct, and concentrated in the eggshell.

It localises to the secreted. In terms of biological role, component of the matrix of the eggshell. The protein is Ovocalyxin-32 of Gallus gallus (Chicken).